Reading from the N-terminus, the 151-residue chain is Chaperonin GroEL (151 aa).

41–45 serves as a coordination point for ATP; it reads DGTTT.

Belongs to the chaperonin (HSP60) family. In terms of assembly, forms a cylinder of 14 subunits composed of two heptameric rings stacked back-to-back. Interacts with the co-chaperonin GroES.

Its subcellular location is the cytoplasm. The catalysed reaction is ATP + H2O + a folded polypeptide = ADP + phosphate + an unfolded polypeptide.. Together with its co-chaperonin GroES, plays an essential role in assisting protein folding. The GroEL-GroES system forms a nano-cage that allows encapsulation of the non-native substrate proteins and provides a physical environment optimized to promote and accelerate protein folding. This Mycolicibacterium fortuitum (Mycobacterium fortuitum) protein is Chaperonin GroEL.